Consider the following 501-residue polypeptide: Probable cytosol aminopeptidase (501 aa).

2 residues coordinate Mn(2+): lysine 270 and aspartate 275. Lysine 282 is a catalytic residue. Mn(2+) contacts are provided by aspartate 293, aspartate 352, and glutamate 354. Arginine 356 is an active-site residue.

This sequence belongs to the peptidase M17 family. Requires Mn(2+) as cofactor.

The protein resides in the cytoplasm. It catalyses the reaction Release of an N-terminal amino acid, Xaa-|-Yaa-, in which Xaa is preferably Leu, but may be other amino acids including Pro although not Arg or Lys, and Yaa may be Pro. Amino acid amides and methyl esters are also readily hydrolyzed, but rates on arylamides are exceedingly low.. It carries out the reaction Release of an N-terminal amino acid, preferentially leucine, but not glutamic or aspartic acids.. Functionally, presumably involved in the processing and regular turnover of intracellular proteins. Catalyzes the removal of unsubstituted N-terminal amino acids from various peptides. The polypeptide is Probable cytosol aminopeptidase (Wigglesworthia glossinidia brevipalpis).